A 346-amino-acid polypeptide reads, in one-letter code: Biotin synthase (346 aa).

A Radical SAM core domain is found at 38–256; the sequence is QQVQVSTLLS…IAVARIMMPT (219 aa). Positions 53, 57, and 60 each coordinate [4Fe-4S] cluster. Positions 97, 128, 188, and 260 each coordinate [2Fe-2S] cluster.

Belongs to the radical SAM superfamily. Biotin synthase family. As to quaternary structure, homodimer. It depends on [4Fe-4S] cluster as a cofactor. [2Fe-2S] cluster is required as a cofactor.

The catalysed reaction is (4R,5S)-dethiobiotin + (sulfur carrier)-SH + 2 reduced [2Fe-2S]-[ferredoxin] + 2 S-adenosyl-L-methionine = (sulfur carrier)-H + biotin + 2 5'-deoxyadenosine + 2 L-methionine + 2 oxidized [2Fe-2S]-[ferredoxin]. The protein operates within cofactor biosynthesis; biotin biosynthesis; biotin from 7,8-diaminononanoate: step 2/2. Its function is as follows. Catalyzes the conversion of dethiobiotin (DTB) to biotin by the insertion of a sulfur atom into dethiobiotin via a radical-based mechanism. The sequence is that of Biotin synthase from Salmonella agona (strain SL483).